We begin with the raw amino-acid sequence, 206 residues long: Glycerol-3-phosphate acyltransferase (206 aa).

A run of 6 helical transmembrane segments spans residues 4–24 (TAFA…AVIV), 53–73 (LAAA…VALA), 86–106 (GIAL…FFGF), 116–136 (VGIL…TWLF), 137–157 (MAFV…LAPV), and 160–180 (FFIL…AIVV).

Belongs to the PlsY family. Probably interacts with PlsX.

Its subcellular location is the cell inner membrane. The enzyme catalyses an acyl phosphate + sn-glycerol 3-phosphate = a 1-acyl-sn-glycero-3-phosphate + phosphate. It participates in lipid metabolism; phospholipid metabolism. In terms of biological role, catalyzes the transfer of an acyl group from acyl-phosphate (acyl-PO(4)) to glycerol-3-phosphate (G3P) to form lysophosphatidic acid (LPA). This enzyme utilizes acyl-phosphate as fatty acyl donor, but not acyl-CoA or acyl-ACP. This Chromobacterium violaceum (strain ATCC 12472 / DSM 30191 / JCM 1249 / CCUG 213 / NBRC 12614 / NCIMB 9131 / NCTC 9757 / MK) protein is Glycerol-3-phosphate acyltransferase.